The sequence spans 1379 residues: DNA-directed RNA polymerase subunit beta (1379 aa).

This sequence belongs to the RNA polymerase beta chain family. In terms of assembly, the RNAP catalytic core consists of 2 alpha, 1 beta, 1 beta' and 1 omega subunit. When a sigma factor is associated with the core the holoenzyme is formed, which can initiate transcription.

The enzyme catalyses RNA(n) + a ribonucleoside 5'-triphosphate = RNA(n+1) + diphosphate. DNA-dependent RNA polymerase catalyzes the transcription of DNA into RNA using the four ribonucleoside triphosphates as substrates. In Ruegeria sp. (strain TM1040) (Silicibacter sp.), this protein is DNA-directed RNA polymerase subunit beta.